A 351-amino-acid chain; its full sequence is Putative phospho-N-acetylmuramoyl-pentapeptide-transferase (351 aa).

10 helical membrane passes run 2-22 (MEFL…TLFI), 44-64 (AGTP…VTVL), 71-91 (LVLT…DDLL), 158-178 (GEKI…GAVG), 181-201 (GGFY…VGAI), 212-232 (GMAA…LGLS), 235-255 (ALPF…NRHP), 258-278 (IFMG…AVML), 281-301 (TVYF…VSLL), and 328-348 (IVLL…YMTG).

The protein belongs to the glycosyltransferase 4 family. MraY subfamily. It depends on Mg(2+) as a cofactor.

The protein resides in the cell membrane. It carries out the reaction UDP-N-acetyl-alpha-D-muramoyl-L-alanyl-gamma-D-glutamyl-meso-2,6-diaminopimeloyl-D-alanyl-D-alanine + di-trans,octa-cis-undecaprenyl phosphate = di-trans,octa-cis-undecaprenyl diphospho-N-acetyl-alpha-D-muramoyl-L-alanyl-D-glutamyl-meso-2,6-diaminopimeloyl-D-alanyl-D-alanine + UMP. This chain is Putative phospho-N-acetylmuramoyl-pentapeptide-transferase, found in Methanothermobacter thermautotrophicus (strain ATCC 29096 / DSM 1053 / JCM 10044 / NBRC 100330 / Delta H) (Methanobacterium thermoautotrophicum).